A 162-amino-acid polypeptide reads, in one-letter code: Probable chemoreceptor glutamine deamidase CheD (162 aa).

The protein belongs to the CheD family.

It carries out the reaction L-glutaminyl-[protein] + H2O = L-glutamyl-[protein] + NH4(+). Its function is as follows. Probably deamidates glutamine residues to glutamate on methyl-accepting chemotaxis receptors (MCPs), playing an important role in chemotaxis. This is Probable chemoreceptor glutamine deamidase CheD from Clostridium novyi (strain NT).